The following is a 272-amino-acid chain: Shikimate dehydrogenase (NADP(+)) (272 aa).

Residues 14–16 (SKS) and Thr61 each bind shikimate. Residue Lys65 is the Proton acceptor of the active site. NADP(+) is bound at residue Glu77. Shikimate-binding residues include Asn86 and Asp102. Residues 126–130 (GAGGA), 149–154 (NRTVSR), and Met213 each bind NADP(+). Tyr215 is a binding site for shikimate. Gly237 provides a ligand contact to NADP(+).

Belongs to the shikimate dehydrogenase family. As to quaternary structure, homodimer.

The catalysed reaction is shikimate + NADP(+) = 3-dehydroshikimate + NADPH + H(+). It participates in metabolic intermediate biosynthesis; chorismate biosynthesis; chorismate from D-erythrose 4-phosphate and phosphoenolpyruvate: step 4/7. Functionally, involved in the biosynthesis of the chorismate, which leads to the biosynthesis of aromatic amino acids. Catalyzes the reversible NADPH linked reduction of 3-dehydroshikimate (DHSA) to yield shikimate (SA). In Escherichia coli O157:H7, this protein is Shikimate dehydrogenase (NADP(+)).